We begin with the raw amino-acid sequence, 838 residues long: G-protein coupled receptor-associated sorting protein 2 (838 aa).

Disordered regions lie at residues 1–122, 218–292, 349–368, and 531–552; these read MTGA…GARP, ASNE…SNPF, RFRH…RAQK, and LELS…PSPE. Positions 13-31 are enriched in basic and acidic residues; sequence KPEKKAGEEVIAGPEREND. The span at 220 to 245 shows a compositional bias: polar residues; sequence NESGFWSADETSTASSFWTGEETSVR. A compositionally biased stretch (basic residues) spans 255–271; that stretch reads RSRHRAKHQTNPRSRPR. S282 and S284 each carry phosphoserine. A compositionally biased stretch (polar residues) spans 542 to 552; sequence SLLQPDQPSPE.

Belongs to the GPRASP family. As to quaternary structure, interacts with cytoplasmic tails of a variety of G-protein coupled receptors such as muscarinic acetylcholine receptor M1/CHRM1 and calcitonin receptor/CALCR. In terms of tissue distribution, expressed in the brain.

Functionally, may play a role in regulation of a variety of G-protein coupled receptors. The chain is G-protein coupled receptor-associated sorting protein 2 (GPRASP2) from Homo sapiens (Human).